The sequence spans 165 residues: Short form salivary protein D7R1 (165 aa).

The signal sequence occupies residues 1–21; the sequence is MFNKLHLVSLLACGLFVIAQA. 3 disulfide bridges follow: Cys-27-Cys-59, Cys-40-Cys-164, and Cys-98-Cys-117. Residues Glu-28, His-56, Tyr-115, Asp-132, and Glu-135 each coordinate serotonin. Positions 115, 132, and 135 each coordinate histamine.

Belongs to the PBP/GOBP family. Female salivary gland. Not detected in female carcass without salivary glands. Not detected in male tissues.

It localises to the secreted. Modulates blood feeding of female mosquitoes on vertebrate species by binding and sequestering different mediators involved in the host response. Binds serotonin and histamine. Increases blood clotting time. The polypeptide is Short form salivary protein D7R1 (Anopheles gambiae (African malaria mosquito)).